The following is a 337-amino-acid chain: Holliday junction branch migration complex subunit RuvB (337 aa).

Residues Met1–Val20 are disordered. Positions Met1–Tyr181 are large ATPase domain (RuvB-L). ATP is bound by residues Arg21, Gly62, Lys65, Thr66, Thr67, Glu128–Tyr130, Arg171, Tyr181, and Arg218. Thr66 contributes to the Mg(2+) binding site. The small ATPAse domain (RuvB-S) stretch occupies residues Asp182 to Gly252. The head domain (RuvB-H) stretch occupies residues Gln255–Leu337. 2 residues coordinate DNA: Arg310 and Arg315.

The protein belongs to the RuvB family. In terms of assembly, homohexamer. Forms an RuvA(8)-RuvB(12)-Holliday junction (HJ) complex. HJ DNA is sandwiched between 2 RuvA tetramers; dsDNA enters through RuvA and exits via RuvB. An RuvB hexamer assembles on each DNA strand where it exits the tetramer. Each RuvB hexamer is contacted by two RuvA subunits (via domain III) on 2 adjacent RuvB subunits; this complex drives branch migration. In the full resolvosome a probable DNA-RuvA(4)-RuvB(12)-RuvC(2) complex forms which resolves the HJ.

The protein resides in the cytoplasm. The catalysed reaction is ATP + H2O = ADP + phosphate + H(+). Functionally, the RuvA-RuvB-RuvC complex processes Holliday junction (HJ) DNA during genetic recombination and DNA repair, while the RuvA-RuvB complex plays an important role in the rescue of blocked DNA replication forks via replication fork reversal (RFR). RuvA specifically binds to HJ cruciform DNA, conferring on it an open structure. The RuvB hexamer acts as an ATP-dependent pump, pulling dsDNA into and through the RuvAB complex. RuvB forms 2 homohexamers on either side of HJ DNA bound by 1 or 2 RuvA tetramers; 4 subunits per hexamer contact DNA at a time. Coordinated motions by a converter formed by DNA-disengaged RuvB subunits stimulates ATP hydrolysis and nucleotide exchange. Immobilization of the converter enables RuvB to convert the ATP-contained energy into a lever motion, pulling 2 nucleotides of DNA out of the RuvA tetramer per ATP hydrolyzed, thus driving DNA branch migration. The RuvB motors rotate together with the DNA substrate, which together with the progressing nucleotide cycle form the mechanistic basis for DNA recombination by continuous HJ branch migration. Branch migration allows RuvC to scan DNA until it finds its consensus sequence, where it cleaves and resolves cruciform DNA. The chain is Holliday junction branch migration complex subunit RuvB from Methanospirillum hungatei JF-1 (strain ATCC 27890 / DSM 864 / NBRC 100397 / JF-1).